The sequence spans 174 residues: Protein PopB (174 aa).

The interval 1–174 is disordered; the sequence is MSHSKIKAGG…EAMKIKDDDD (174 aa). Residues 50 to 65 are compositionally biased toward polar residues; sequence LNKSNLGSDSQTWTPG. A compositionally biased stretch (low complexity) spans 66 to 78; the sequence is STMVSLKSRSSSS. The segment covering 79-89 has biased composition (basic and acidic residues); it reads HKPDTGGDTKP. Residues 147–161 show a composition bias toward low complexity; that stretch reads IALQRAIQRQTQTRQ. A compositionally biased stretch (basic and acidic residues) spans 162–174; that stretch reads KMQEAMKIKDDDD.

The protein localises to the secreted. Probably involved in host-pathogen interactions. The sequence is that of Protein PopB (popB) from Ralstonia nicotianae (strain ATCC BAA-1114 / GMI1000) (Ralstonia solanacearum).